Here is a 49-residue protein sequence, read N- to C-terminus: Defensin Tk-AMP-D1 (49 aa).

4 disulfides stabilise this stretch: cysteine 3-cysteine 49, cysteine 14-cysteine 34, cysteine 20-cysteine 43, and cysteine 24-cysteine 45.

Its function is as follows. Has weak antifungal activity against F.graminearum and F.verticillioides below 30 ug/ml, but not against A.consortiale B.cinerea, H.sativum, F.culmorum, C.graminicola and D.maydis. The chain is Defensin Tk-AMP-D1 from Triticum kiharae (Wheat).